Here is a 767-residue protein sequence, read N- to C-terminus: Glucoamylase S1 (767 aa).

The N-terminal stretch at 1–21 is a signal peptide; the sequence is MQRPFLLAYLVLSLLFNSALG. 2 disordered regions span residues 29 to 83 and 125 to 149; these read RGSS…ETTI and TTTV…PTTP. Low complexity predominate over residues 30–48; that stretch reads GSSSSNITSSGPSSTPFSS. N35 is a glycosylation site (N-linked (GlcNAc...) asparagine). Residues 49-66 are compositionally biased toward polar residues; the sequence is ATESFSTGTTVTPSSSKY. Composition is skewed to low complexity over residues 71–83 and 131–149; these read TETS…ETTI and STSP…PTTP. Residues N308, N322, N414, N423, and N434 are each glycosylated (N-linked (GlcNAc...) asparagine). The h subunit stretch occupies residues 348–691; that stretch reads VSIERIFENI…ASTTLYQLIY (344 aa). W455 provides a ligand contact to substrate. The N-linked (GlcNAc...) asparagine glycan is linked to N513. The Proton acceptor role is filled by D518. Residue E521 is the Proton donor of the active site. N-linked (GlcNAc...) asparagine glycosylation is found at N546, N645, N650, N720, and N741. The interval 692-767 is y subunit; sequence RHISEQHDLV…LKATWEQTGN (76 aa).

Belongs to the glycosyl hydrolase 15 family.

It catalyses the reaction Hydrolysis of terminal (1-&gt;4)-linked alpha-D-glucose residues successively from non-reducing ends of the chains with release of beta-D-glucose.. The protein is Glucoamylase S1 (STA1) of Saccharomyces cerevisiae (Baker's yeast).